The sequence spans 1406 residues: DNA-directed RNA polymerase subunit beta' (1406 aa).

Cysteine 72, cysteine 74, cysteine 87, and cysteine 90 together coordinate Zn(2+). Mg(2+) contacts are provided by aspartate 462, aspartate 464, and aspartate 466. Zn(2+) is bound by residues cysteine 816, cysteine 889, cysteine 896, and cysteine 899.

The protein belongs to the RNA polymerase beta' chain family. The RNAP catalytic core consists of 2 alpha, 1 beta, 1 beta' and 1 omega subunit. When a sigma factor is associated with the core the holoenzyme is formed, which can initiate transcription. It depends on Mg(2+) as a cofactor. Zn(2+) serves as cofactor.

It carries out the reaction RNA(n) + a ribonucleoside 5'-triphosphate = RNA(n+1) + diphosphate. Functionally, DNA-dependent RNA polymerase catalyzes the transcription of DNA into RNA using the four ribonucleoside triphosphates as substrates. The chain is DNA-directed RNA polymerase subunit beta' from Psychrobacter sp. (strain PRwf-1).